The chain runs to 387 residues: MHCAILKAEAVDGARLMQIFWHDGAESLYPAVWLRDNCQCSDCYLHSAKARKLLLEALDVNIRMDDLTFDQKKVYITWPNGHYSEFEANWLKKRCFSQEARAGLQGELFLPECQYWGSELQLPTLNFEDVLNDDDHAYKWLSSLKKVGIVRLTGAADKRGEIIKLGKRIGFLYLTFYGHTWQVQDKIDANNVAYTTGKLSFHTDYPALHHPPGVQLLHCIKQTVTGGDSEIVDGFNVCQKLKEKNPQAFSILSSTFVDFTDIGVDYCDFSVQSKHKIIELDDKGQVVRINFNNATRDTVFDVPIERVQPFYAALKEFVDLMNSKEYKYTFKMNPGDVITFDNWRLLHGRRSYEAGTEISRHLEGAYADWDVVMSRLRILRQRVMNGN.

Positions 38, 40, 43, and 82 each coordinate Zn(2+). Positions 202, 204, and 347 each coordinate Fe cation. Ser351 is modified (phosphoserine).

This sequence belongs to the gamma-BBH/TMLD family. It depends on Fe(2+) as a cofactor. Requires L-ascorbate as cofactor. Expressed in the liver and in some extend in the testis and the epididymis.

The protein localises to the cytoplasm. It carries out the reaction 4-(trimethylamino)butanoate + 2-oxoglutarate + O2 = carnitine + succinate + CO2. It functions in the pathway amine and polyamine biosynthesis; carnitine biosynthesis. Catalyzes the formation of L-carnitine from gamma-butyrobetaine. This is Gamma-butyrobetaine dioxygenase (Bbox1) from Rattus norvegicus (Rat).